Reading from the N-terminus, the 1892-residue chain is MAGHGAGGRRASTSRAAARRVEAETNENDDLAAAAARDLAAAEVPAEVPHFELDEDPAFWKDRNVQVLIRIRPINAAESTANGQRRCLVQDSSKTLSWTGHPDTMFTFDHVACETISQEKLFGVVGLPMVENCMSGYNGCLFAYGQTGSGKTYTMMGELSKLDNELSKDSGLTPRIFEYLFARIKEEEERRREDKLKYICKCSFLEIYNEQITDLLEPSSTNLQIREDIKKGVYVENLMECYVSSVKDVMMLLLQGVANRKMAATNMNSESSRSHSVFTCVIESRWERDSMTHLRFGRLNLVDLAGSERQKSSGAEGERLKEAANINRSLSTLGLVIMTLVDVANGKNRHVPYRDSRLTFLLQDSLGGNSKTTIVANVSPSICSSSETLSTLKFAQRAKLIQNNAKVNEDASGDVMSLQRQIEDLKDQLTCLKKQQNMPGSPSFKLLKSGYGNEFNSLHGVDDQSACDLELLKQKVIHLEDVLVGSLRREKSAETEIRKLECEIKSLNRLVNLMESDTRHLRTTVKLRDEKIRRLELLADNQISSDGYLMDENAAMFQEIQLLQEQINDNSQLTQFALENKRLIEQVRMLEKFSKQGEREMLLTEISLLRNHFLHILEQKYARPPKNMEAQGDVTIKELETCRKELDACLENNVLLAREVNKLRCELKQYQKCGTGQVAPEVVESSVIPGINQKQHDQAGWCGSYLASIDVERQFVDVGITTDITESLELTPPSEIYSENQDSPSRLHFSDPEICDLKNSTKVLEYNSSRNLLDKGIILSGQLENECGLNSVQNDEISLVKENAEKMYGHDEISVYRQNEILHSSEQLLQDELTHIKSLNEGLKEKLIIMAEESTKLSEIIVAKDVEIATLSEEWESAIVDLTSFLTDGCSSLDDAYQNIDNMISSFPYNNHSVSEHVEKAMKVSIEKEKIISRLQIELQAAQRMGREVKEKLHILRGATLAITEAQLLDNDESQEALKLLDLMRQKDCTVQELNDNVKQKSCLFAEATEGYSRHECHLPDNVGTVAEISHNRDGSEVNQANTHYQAKLEDVLHLVEDKSNKVLALFSNFEEAQETMEEAETMLSSLLKANEELKLEKDSCRQAVELLFAERTSLINDLQELEASNSFTAQRYDKLHEQVNGCVAEMTNLATIIKESFHQVQRVTTVELFAFCSEVISFGQDLRKWIYESRSYLVNMGALLEEQGNSYAEQNRRTNSSTYAGVSQQVESCSRQLGGMNGDIFPGTYMVVDGKEKASVHVVPFGSNAELEDTNVERTFDMDYASLRREFDRKSDVAEGLSFDLKLLQESTSQAKDMKDKADEISDALVSVQRELEKKTSAMESILKQQKVLEEELAENGAALLILRSELEHSESLSSELFKENNNLKVMLEEEAMMISETKAMLEDKSKVIEGLEHEILLLNSSEEGRLMSQIKELNDNLKIISIDKGNLEEEILKLTDKLEMAVALAEENEAASIEARQAAEISKVYAEEKEEEVRILERSVEELESTITVLEEEVCNLKEEVRSYQIYKKSEAEQAQEMFIVDSTSKCDATEQLCPGRCQLEKRLKAEIIAHQDARRKIECLTMEASCKDEEVRQYKEHIAELVLHSEAQSLLFQEKYQEMEHMISKQKFGLHESNSDTGHTKFEKPSGRTRGSGSPFRCISSIVQQMNSEKDQEISVARQRIEELEGLVCNKQKEICMLTSRLAAVDSMTHDIIRELLGVKLDMTNYANMLDQEELQKLLMASQQQIEQSKAKDVELDMLKEQFDHLIQERDSLFDDMDQRKADLLESQLLIEQLEQREQMLEAQNGILQMEKDNLQQRIMEMDEEIQLLVGSNQAIAETTFQMGSNHRSANSEFSRRLAQSDMLLSHARHEHSRLQAAKSSRTRRGSHQ.

The interval 1-28 is disordered; sequence MAGHGAGGRRASTSRAAARRVEAETNEN. The region spanning 64–401 is the Kinesin motor domain; sequence NVQVLIRIRP…LKFAQRAKLI (338 aa). 145-152 contacts ATP; sequence GQTGSGKT. 5 coiled-coil regions span residues 406–438, 486–526, 1066–1139, 1303–1357, and 1396–1528; these read KVNEDASGDVMSLQRQIEDLKDQLTCLKKQQNM, SLRR…TTVK, LFSN…LHEQ, KLLQ…LAEN, and ISET…SYQI. The span at 1633 to 1649 shows a compositional bias: basic and acidic residues; that stretch reads LHESNSDTGHTKFEKPS. A disordered region spans residues 1633–1656; sequence LHESNSDTGHTKFEKPSGRTRGSG. Residues 1780 to 1841 adopt a coiled-coil conformation; that stretch reads MDQRKADLLE…LVGSNQAIAE (62 aa). The tract at residues 1870-1892 is disordered; it reads HARHEHSRLQAAKSSRTRRGSHQ.

This sequence belongs to the TRAFAC class myosin-kinesin ATPase superfamily. Kinesin family. KIN-12 subfamily.

This is Kinesin-like protein KIN-12E from Oryza sativa subsp. japonica (Rice).